A 211-amino-acid polypeptide reads, in one-letter code: Ubiquitin-conjugating enzyme E2 S-B (211 aa).

One can recognise a UBC core domain in the interval 11–157 (HIIRRVYKEV…ARLMTDIHAQ (147 aa)). Cysteine 95 functions as the Glycyl thioester intermediate in the catalytic mechanism. Residues 158–211 (GTSLRGKDPTDPCSSASTPVVSGDGPMAKKHAGDRDKKLAAKKKTDKKRALRRL) are disordered. Residues 197–211 (AAKKKTDKKRALRRL) are compositionally biased toward basic residues.

The protein belongs to the ubiquitin-conjugating enzyme family.

The enzyme catalyses S-ubiquitinyl-[E1 ubiquitin-activating enzyme]-L-cysteine + [E2 ubiquitin-conjugating enzyme]-L-cysteine = [E1 ubiquitin-activating enzyme]-L-cysteine + S-ubiquitinyl-[E2 ubiquitin-conjugating enzyme]-L-cysteine.. It participates in protein modification; protein ubiquitination. Its function is as follows. Catalyzes the covalent attachment of ubiquitin to other proteins. Acts as an essential factor of the anaphase promoting complex/cyclosome (APC/C), a cell cycle-regulated ubiquitin ligase that controls progression through mitosis. Acts by specifically elongating 'Lys-11'-linked polyubiquitin chains initiated by the E2 enzyme ube2c/ubch10 on APC/C substrates, enhancing the degradation of APC/C substrates by the proteasome and promoting mitotic exit. The protein is Ubiquitin-conjugating enzyme E2 S-B (ube2s-b) of Xenopus laevis (African clawed frog).